A 153-amino-acid polypeptide reads, in one-letter code: Probable Brix domain-containing ribosomal biogenesis protein (153 aa).

One can recognise a Brix domain in the interval 1-153 (MQVLTTSRKP…RILKISRSSR (153 aa)).

Its function is as follows. Probably involved in the biogenesis of the ribosome. This Archaeoglobus fulgidus (strain ATCC 49558 / DSM 4304 / JCM 9628 / NBRC 100126 / VC-16) protein is Probable Brix domain-containing ribosomal biogenesis protein.